The sequence spans 435 residues: ATP-dependent protease ATPase subunit HslU (435 aa).

Residues valine 18, 60 to 65 (GVGKTE), aspartate 248, glutamate 313, and arginine 385 contribute to the ATP site.

Belongs to the ClpX chaperone family. HslU subfamily. A double ring-shaped homohexamer of HslV is capped on each side by a ring-shaped HslU homohexamer. The assembly of the HslU/HslV complex is dependent on binding of ATP.

The protein resides in the cytoplasm. In terms of biological role, ATPase subunit of a proteasome-like degradation complex; this subunit has chaperone activity. The binding of ATP and its subsequent hydrolysis by HslU are essential for unfolding of protein substrates subsequently hydrolyzed by HslV. HslU recognizes the N-terminal part of its protein substrates and unfolds these before they are guided to HslV for hydrolysis. This is ATP-dependent protease ATPase subunit HslU from Xanthobacter autotrophicus (strain ATCC BAA-1158 / Py2).